Reading from the N-terminus, the 124-residue chain is Putative peptidyl-tRNA hydrolase (124 aa).

This sequence belongs to the PTH2 family.

It catalyses the reaction an N-acyl-L-alpha-aminoacyl-tRNA + H2O = an N-acyl-L-amino acid + a tRNA + H(+). In Fowlpox virus (strain NVSL) (FPV), this protein is Putative peptidyl-tRNA hydrolase.